A 529-amino-acid chain; its full sequence is MLMLLVRGTRYENHRPKVTLPTPLGGRSNEATVCESPSPDTGIRWRRSDEALRVNVGGVRRLLSARALARFPGTRLGRLQAAASEEQARRLCDDYDAAAREFYFDRHPGFFLGLLHFYRTGHLHVLDELCVFAFGQEADYWGLGENALAACCRARYLERRVTRPRAWDEDSDTPSSVDPCPDEISDVQRELARYGAARCGRLRRRLWLTMENPGYSLPSKLFSCVSISVVLASIAAMCIHSLPEYQAREAAAAVAAVAAGRSAEGVRDDPVLRRLEYFCIAWFSFEVSSRLLLAPSTRNFFCHPLNLIDIVSVLPFYLTLLAGAALGDHGGTGGKEFGHLGKVVQVFRLMRIFRVLKLARHSTGLRSLGATLKHSYREVGILLLYLAVGVSVFSGVAYTAEKEEHVGFDTIPACWWWGTVSMTTVGYGDVVPVTVAGKLAASGCILGGILVVALPITIIFNKFSHFYRRQKALEAAVRNSNHQEFEDLLSSVDGVSEASLETSRETSQEGRSADLETQVPSEPPHSQMY.

At M1 to L217 the chain is on the cytoplasmic side. A helical transmembrane segment spans residues P218–I239. The Extracellular segment spans residues H240–P270. The chain crosses the membrane as a helical span at residues V271–L293. The Cytoplasmic portion of the chain corresponds to A294 to P304. Residues L305–A322 traverse the membrane as a helical segment. Residues G323–L340 are Extracellular-facing. Residues G341 to H361 form a helical; Voltage-sensor membrane-spanning segment. The Cytoplasmic portion of the chain corresponds to S362–Y376. A helical transmembrane segment spans residues R377–Y398. The Extracellular segment spans residues T399 to I411. The segment at residues P412–T423 is an intramembrane region (helical). The Selectivity filter motif lies at T424 to D429. An intramembrane segment occupies T424–V431. The Extracellular segment spans residues P432 to K438. Residues L439–Y467 traverse the membrane as a helical segment. At R468–Y529 the chain is on the cytoplasmic side. A disordered region spans residues G494–Y529. Positions T502–D514 are enriched in basic and acidic residues.

The protein belongs to the potassium channel family. S (TC 1.A.1.2) subfamily. Kv9.1/KCNS1 sub-subfamily. Heterotetramer with KCNB1. Heterotetramer with KCNB2. Does not form homomultimers.

The protein localises to the cell membrane. Its function is as follows. Potassium channel regulatory subunit that modulate the delayed rectifier voltage-gated potassium channel activity of KCNB1 and KCNB2 by altering their kinetics, expression levels, and shifting the half-inactivation potential to more polarized values. While it does not form functional channels on its own, it can form functional heterotetrameric channels with KCNB1 and KCNB2. Each regulatory subunit has unique regulatory properties that can lead to extensive inhibition, significant changes in kinetics, and/or substantial shifts in the voltage dependencies of the inactivation process. The polypeptide is Delayed-rectifier potassium channel regulatory subunit KCNS1 (Aotus nancymaae (Ma's night monkey)).